A 216-amino-acid chain; its full sequence is Serine acetyltransferase (216 aa).

Belongs to the transferase hexapeptide repeat family.

It is found in the cytoplasm. It catalyses the reaction L-serine + acetyl-CoA = O-acetyl-L-serine + CoA. The protein operates within amino-acid biosynthesis; L-cysteine biosynthesis; L-cysteine from L-serine: step 1/2. This is Serine acetyltransferase (cysE) from Staphylococcus xylosus.